Consider the following 888-residue polypeptide: Serine/arginine repetitive matrix protein 1 (888 aa).

The 100-residue stretch at Q27 to L126 folds into the PWI domain. Residues E139–R169 are compositionally biased toward basic and acidic residues. The tract at residues E139–S888 is disordered. The span at S170–S206 shows a compositional bias: basic residues. 2 stretches are compositionally biased toward basic and acidic residues: residues P213–V232 and E254–R276. 2 stretches are compositionally biased toward basic residues: residues Q277 to P325 and P332 to S347. Low complexity-rich tracts occupy residues S348 to R364 and S473 to S496. Composition is skewed to basic residues over residues P528–S554 and P561–S585. Low complexity predominate over residues P586–S598. 2 stretches are compositionally biased toward basic residues: residues P614–S629 and A642–G656. Basic and acidic residues predominate over residues S662–P677. 3 stretches are compositionally biased toward low complexity: residues A697–R712, A728–P749, and A763–A775. The span at S780–N790 shows a compositional bias: polar residues. A compositionally biased stretch (basic residues) spans K798–E823. Residues A826 to Q843 are compositionally biased toward low complexity. Over residues D866–L876 the composition is skewed to basic and acidic residues.

This sequence belongs to the splicing factor SR family.

The protein localises to the nucleus. In terms of biological role, involved in pre-mRNA splicing and processing events. The chain is Serine/arginine repetitive matrix protein 1 (SRRM1) from Gallus gallus (Chicken).